The sequence spans 110 residues: Phosphoribosyl-ATP pyrophosphatase (110 aa).

The protein belongs to the PRA-PH family.

The protein localises to the cytoplasm. The enzyme catalyses 1-(5-phospho-beta-D-ribosyl)-ATP + H2O = 1-(5-phospho-beta-D-ribosyl)-5'-AMP + diphosphate + H(+). Its pathway is amino-acid biosynthesis; L-histidine biosynthesis; L-histidine from 5-phospho-alpha-D-ribose 1-diphosphate: step 2/9. This is Phosphoribosyl-ATP pyrophosphatase from Pseudomonas syringae pv. tomato (strain ATCC BAA-871 / DC3000).